Here is a 236-residue protein sequence, read N- to C-terminus: Orotidine 5'-phosphate decarboxylase (236 aa).

Substrate is bound by residues aspartate 16, lysine 38, 65 to 74, threonine 124, arginine 185, glutamine 194, glycine 214, and arginine 215; that span reads DLKYHDIPNT. Lysine 67 functions as the Proton donor in the catalytic mechanism.

Belongs to the OMP decarboxylase family. Type 1 subfamily. As to quaternary structure, homodimer.

The enzyme catalyses orotidine 5'-phosphate + H(+) = UMP + CO2. It functions in the pathway pyrimidine metabolism; UMP biosynthesis via de novo pathway; UMP from orotate: step 2/2. In terms of biological role, catalyzes the decarboxylation of orotidine 5'-monophosphate (OMP) to uridine 5'-monophosphate (UMP). The polypeptide is Orotidine 5'-phosphate decarboxylase (Hydrogenovibrio crunogenus (strain DSM 25203 / XCL-2) (Thiomicrospira crunogena)).